The sequence spans 485 residues: Mitochondria-eating protein (485 aa).

The stretch at 112–210 (TSHERELNEV…SILSSESSIL (99 aa)) forms a coiled coil. Low complexity-rich tracts occupy residues 214-241 (LSRSRSPSPIRHSSRSSSPFARSESPTS) and 471-485 (RSRSPSPRRSGTPRF). Disordered regions lie at residues 214 to 244 (LSRSRSPSPIRHSSRSSSPFARSESPTSAKL) and 451 to 485 (RSRSASPLRSHSDSPGHNLTRSRSPSPRRSGTPRF).

This sequence belongs to the MIEAP family.

It is found in the cytoplasm. The protein resides in the mitochondrion outer membrane. It localises to the mitochondrion matrix. Its function is as follows. Key regulator of mitochondrial quality that mediates the repairing or degradation of unhealthy mitochondria in response to mitochondrial damage. Mediator of mitochondrial protein catabolic process (also named MALM) by mediating the degradation of damaged proteins inside mitochondria by promoting the accumulation in the mitochondrial matrix of hydrolases that are characteristic of the lysosomal lumen. Also involved in mitochondrion degradation of damaged mitochondria by promoting the formation of vacuole-like structures (named MIV), which engulf and degrade unhealthy mitochondria by accumulating lysosomes. Binds cardiolipin. May form molecular condensates (non-membrane-bounded organelles) within mitochondria that compartmentalize and promote cardiolipin metabolism. The polypeptide is Mitochondria-eating protein (spata18) (Xenopus laevis (African clawed frog)).